The primary structure comprises 529 residues: O-acetylstemmadenine oxidase (529 aa).

The N-terminal stretch at M1–G23 is a signal peptide. C32 and C92 are disulfide-bonded. N52 is a glycosylation site (N-linked (GlcNAc...) asparagine). The FAD-binding PCMH-type domain maps to K70–V244. Residues I102–D108, S113, V168–S169, G173–H177, and F183 contribute to the FAD site. N293 is a glycosylation site (N-linked (GlcNAc...) asparagine). An FAD-binding site is contributed by W465.

The protein belongs to the oxygen-dependent FAD-linked oxidoreductase family. It depends on FAD as a cofactor. Expressed in leaf epidermis.

It localises to the endoplasmic reticulum. Its subcellular location is the vacuole. The protein resides in the vesicle. It carries out the reaction O-acetyl-15alpha-stemmadenine + O2 = precondylocarpine acetate + H2O2. It participates in alkaloid biosynthesis. Component of the seco-iridoid and derivatives monoterpenoid indole alkaloids (MIAs, e.g. vinblastine, catharanthine, tabersonine, vincadifformine, vindoline, vincristine, quinine and strychnine) biosynthesis pathway. Converts O-acetylstemmadenine (OAS) to reactive acetylated intermediates, likely dihydroprecondylocarpine acetate. This Catharanthus roseus (Madagascar periwinkle) protein is O-acetylstemmadenine oxidase.